A 764-amino-acid chain; its full sequence is Tyrosine-protein phosphatase corkscrew (764 aa).

The SH2 domain maps to 1-95; that stretch reads WFHGNLSGKE…GTVVHLRQPF (95 aa). The Tyrosine-protein phosphatase domain maps to 117-522; the sequence is FWEEFESLQQ…KFVYYAVQHY (406 aa). The interval 174 to 325 is PTPase insert (Cys/Ser-rich); sequence IRLPTDGDLY…LNGEGNQFKT (152 aa). Residues 246–273 are disordered; that stretch reads SKHKRSESMSASANASAAGTGPGTPTAA. Positions 255–273 are enriched in low complexity; the sequence is SASANASAAGTGPGTPTAA. Residues Asp-422, 460 to 466, and Gln-507 contribute to the substrate site; that span reads CSAGIGR. Cys-460 functions as the Phosphocysteine intermediate in the catalytic mechanism. The tract at residues 599-666 is disordered; the sequence is AAKLQPPLPP…NANGNGNILG (68 aa). A compositionally biased stretch (low complexity) spans 612-666; it reads SNNNNSSGNSGSYCNSSSSTSTAQHNGVVSSSNNCSSGSGSANSSNANGNGNILG.

The protein belongs to the protein-tyrosine phosphatase family. Non-receptor class subfamily.

The protein localises to the cytoplasm. It carries out the reaction O-phospho-L-tyrosyl-[protein] + H2O = L-tyrosyl-[protein] + phosphate. Its function is as follows. Required in all receptor tyrosine kinase signaling pathways. Functions downstream of the receptor tyrosine kinase torso, acting in concert with D-Raf via tailless. Also functions downstream of Egfr (epidermal growth factor receptor) and btl (fibroblast growth factor receptor). The SH2 domain suggests that csw effects its role by mediating heteromeric protein interactions. Maternally required for normal determination of cell fates at the termini of the embryo. Required for cell fate specification of the ventral ectoderm, in the developing embryonic CNS and for embryonic tracheal cell migration. Functions during imaginal development for proper formation of adult structures such as eyes, aristae, L5 wing vein and the tarsal claw. This chain is Tyrosine-protein phosphatase corkscrew (csw), found in Drosophila virilis (Fruit fly).